The sequence spans 483 residues: Glutamyl-tRNA(Gln) amidotransferase subunit A (483 aa).

Active-site charge relay system residues include Lys-75 and Ser-150. The Acyl-ester intermediate role is filled by Ser-174.

It belongs to the amidase family. GatA subfamily. In terms of assembly, heterotrimer of A, B and C subunits.

It catalyses the reaction L-glutamyl-tRNA(Gln) + L-glutamine + ATP + H2O = L-glutaminyl-tRNA(Gln) + L-glutamate + ADP + phosphate + H(+). Allows the formation of correctly charged Gln-tRNA(Gln) through the transamidation of misacylated Glu-tRNA(Gln) in organisms which lack glutaminyl-tRNA synthetase. The reaction takes place in the presence of glutamine and ATP through an activated gamma-phospho-Glu-tRNA(Gln). The polypeptide is Glutamyl-tRNA(Gln) amidotransferase subunit A (Deinococcus geothermalis (strain DSM 11300 / CIP 105573 / AG-3a)).